Reading from the N-terminus, the 1098-residue chain is Probable DNA-directed RNA polymerase (1098 aa).

Positions 1-24 (PIRESVRVSTDRDPDLEDEKREQL) are enriched in basic and acidic residues. A disordered region spans residues 1-26 (PIRESVRVSTDRDPDLEDEKREQLGE). Catalysis depends on residues Asp-663, Lys-750, and Asp-915.

It belongs to the phage and mitochondrial RNA polymerase family.

It localises to the mitochondrion. It carries out the reaction RNA(n) + a ribonucleoside 5'-triphosphate = RNA(n+1) + diphosphate. Functionally, DNA-dependent RNA polymerase catalyzes the transcription of DNA into RNA using the four ribonucleoside triphosphates as substrates. The sequence is that of Probable DNA-directed RNA polymerase from Zea mays (Maize).